Consider the following 147-residue polypeptide: Transcription antitermination protein NusB (147 aa).

The protein belongs to the NusB family.

In terms of biological role, involved in transcription antitermination. Required for transcription of ribosomal RNA (rRNA) genes. Binds specifically to the boxA antiterminator sequence of the ribosomal RNA (rrn) operons. This chain is Transcription antitermination protein NusB, found in Legionella pneumophila (strain Paris).